A 201-amino-acid chain; its full sequence is Superoxide dismutase [Mn] (201 aa).

The Mn(2+) site is built by H27, H81, D163, and H167.

It belongs to the iron/manganese superoxide dismutase family. Homodimer. It depends on Mn(2+) as a cofactor.

The protein resides in the secreted. It carries out the reaction 2 superoxide + 2 H(+) = H2O2 + O2. Its function is as follows. Destroys superoxide anion radicals which are normally produced within the cells and which are toxic to biological systems. The polypeptide is Superoxide dismutase [Mn] (sodA) (Streptococcus pyogenes serotype M3 (strain ATCC BAA-595 / MGAS315)).